The sequence spans 351 residues: Probable dual-specificity RNA methyltransferase RlmN (351 aa).

Catalysis depends on glutamate 92, which acts as the Proton acceptor. A Radical SAM core domain is found at 98-332; that stretch reads TDQRLTVCIS…VSLRASRGLD (235 aa). Cysteine 105 and cysteine 337 are joined by a disulfide. 3 residues coordinate [4Fe-4S] cluster: cysteine 112, cysteine 116, and cysteine 119. Residues 159–160, serine 189, 218–220, and asparagine 294 contribute to the S-adenosyl-L-methionine site; these read GE and SLH. Catalysis depends on cysteine 337, which acts as the S-methylcysteine intermediate.

This sequence belongs to the radical SAM superfamily. RlmN family. It depends on [4Fe-4S] cluster as a cofactor.

The protein resides in the cytoplasm. The enzyme catalyses adenosine(2503) in 23S rRNA + 2 reduced [2Fe-2S]-[ferredoxin] + 2 S-adenosyl-L-methionine = 2-methyladenosine(2503) in 23S rRNA + 5'-deoxyadenosine + L-methionine + 2 oxidized [2Fe-2S]-[ferredoxin] + S-adenosyl-L-homocysteine. It carries out the reaction adenosine(37) in tRNA + 2 reduced [2Fe-2S]-[ferredoxin] + 2 S-adenosyl-L-methionine = 2-methyladenosine(37) in tRNA + 5'-deoxyadenosine + L-methionine + 2 oxidized [2Fe-2S]-[ferredoxin] + S-adenosyl-L-homocysteine. Functionally, specifically methylates position 2 of adenine 2503 in 23S rRNA and position 2 of adenine 37 in tRNAs. The protein is Probable dual-specificity RNA methyltransferase RlmN of Synechococcus sp. (strain CC9902).